Here is a 692-residue protein sequence, read N- to C-terminus: DNA ligase (692 aa).

Residues 35–39, 88–89, and Glu-117 contribute to the NAD(+) site; these read DLVYD and SL. Lys-119 (N6-AMP-lysine intermediate) is an active-site residue. NAD(+) is bound by residues Arg-140, Glu-176, Lys-301, and Lys-325. Positions 416, 419, 434, and 439 each coordinate Zn(2+). Residues 611-692 enclose the BRCT domain; it reads LTNQSNSWAS…FDLIKNSKKT (82 aa).

Belongs to the NAD-dependent DNA ligase family. LigA subfamily. Mg(2+) serves as cofactor. The cofactor is Mn(2+).

It carries out the reaction NAD(+) + (deoxyribonucleotide)n-3'-hydroxyl + 5'-phospho-(deoxyribonucleotide)m = (deoxyribonucleotide)n+m + AMP + beta-nicotinamide D-nucleotide.. Its function is as follows. DNA ligase that catalyzes the formation of phosphodiester linkages between 5'-phosphoryl and 3'-hydroxyl groups in double-stranded DNA using NAD as a coenzyme and as the energy source for the reaction. It is essential for DNA replication and repair of damaged DNA. This chain is DNA ligase, found in Mesomycoplasma hyopneumoniae (strain J / ATCC 25934 / NCTC 10110) (Mycoplasma hyopneumoniae).